A 118-amino-acid polypeptide reads, in one-letter code: Putative pterin-4-alpha-carbinolamine dehydratase (118 aa).

This sequence belongs to the pterin-4-alpha-carbinolamine dehydratase family.

It carries out the reaction (4aS,6R)-4a-hydroxy-L-erythro-5,6,7,8-tetrahydrobiopterin = (6R)-L-erythro-6,7-dihydrobiopterin + H2O. This chain is Putative pterin-4-alpha-carbinolamine dehydratase, found in Xanthomonas oryzae pv. oryzae (strain MAFF 311018).